Reading from the N-terminus, the 186-residue chain is Elongation factor P (186 aa).

This sequence belongs to the elongation factor P family.

The protein resides in the cytoplasm. Its pathway is protein biosynthesis; polypeptide chain elongation. Involved in peptide bond synthesis. Stimulates efficient translation and peptide-bond synthesis on native or reconstituted 70S ribosomes in vitro. Probably functions indirectly by altering the affinity of the ribosome for aminoacyl-tRNA, thus increasing their reactivity as acceptors for peptidyl transferase. This is Elongation factor P from Shewanella woodyi (strain ATCC 51908 / MS32).